Here is a 427-residue protein sequence, read N- to C-terminus: MESLPRRVALLSVHTSPLHQPGTGDAGGMNVYIVELSRRLADLGIEVEIFTRATTGALPPAVDLAPGVLVRHVTAGPYEGLSKEDLPGQLCAFTSGVLRTEAMHEPGYYDLIHSHYWLSGQVGWLAKERWGVPLIHSMHTLGKVKNAALALGDDPEPTARLVGEDQVVDAADRLIANTDQEASELVRLYGADPGRVSTVNPGVDLDRFRPGDKRAARESVGLPPDAAVLLFVGRIQPLKAPDVLLRAAAELIAREPERREKLVVAVVGGPSGSGLAEPTHLHRLARRLGIADVVRFVKPVDQTRLADWYRAADIAVVPSYSESFGLVAIEAQACGTPVVAARVGGLATAVADGRSGTLVAGHDPGDYATAVAGLLDAPHRLADFGENAVEHAARFGWSATAAATADVYSRSIEDLRALRYRELCAGQ.

A 1D-myo-inositol 3-phosphate-binding site is contributed by histidine 14. UDP-N-acetyl-alpha-D-glucosamine contacts are provided by residues 20–21 and glycine 28; that span reads QP. 1D-myo-inositol 3-phosphate-binding positions include 25–30, lysine 83, tyrosine 116, threonine 140, and arginine 160; that span reads DAGGMN. The UDP-N-acetyl-alpha-D-glucosamine site is built by arginine 234, lysine 239, and valine 300. Mg(2+) is bound by residues tyrosine 309, arginine 310, and alanine 312. Positions 322 and 330 each coordinate UDP-N-acetyl-alpha-D-glucosamine. Residue threonine 336 participates in Mg(2+) binding.

The protein belongs to the glycosyltransferase group 1 family. MshA subfamily. As to quaternary structure, homodimer.

It catalyses the reaction 1D-myo-inositol 3-phosphate + UDP-N-acetyl-alpha-D-glucosamine = 1D-myo-inositol 2-acetamido-2-deoxy-alpha-D-glucopyranoside 3-phosphate + UDP + H(+). Functionally, catalyzes the transfer of a N-acetyl-glucosamine moiety to 1D-myo-inositol 3-phosphate to produce 1D-myo-inositol 2-acetamido-2-deoxy-glucopyranoside 3-phosphate in the mycothiol biosynthesis pathway. This is D-inositol 3-phosphate glycosyltransferase 2 from Catenulispora acidiphila (strain DSM 44928 / JCM 14897 / NBRC 102108 / NRRL B-24433 / ID139908).